The sequence spans 188 residues: Peptide deformylase (188 aa).

2 residues coordinate Fe cation: Cys94 and His136. The active site involves Glu137. His140 contacts Fe cation.

It belongs to the polypeptide deformylase family. The cofactor is Fe(2+).

The catalysed reaction is N-terminal N-formyl-L-methionyl-[peptide] + H2O = N-terminal L-methionyl-[peptide] + formate. Its function is as follows. Removes the formyl group from the N-terminal Met of newly synthesized proteins. Requires at least a dipeptide for an efficient rate of reaction. N-terminal L-methionine is a prerequisite for activity but the enzyme has broad specificity at other positions. The sequence is that of Peptide deformylase from Chlorobium phaeobacteroides (strain DSM 266 / SMG 266 / 2430).